Here is a 95-residue protein sequence, read N- to C-terminus: RING finger protein Z (95 aa).

Gly-2 carries the N-myristoyl glycine; by host lipid modification. An RING-type; atypical zinc finger spans residues 38–74 (CKSCWFANRGLIACSDHYLCLNCLTRLRSQSQFCGIC). The PTAP/PSAP motif signature appears at 88–91 (PSAP).

The protein belongs to the arenaviridae Z protein family. In terms of assembly, interacts with protein NP; this interaction probably directs the encapsidated genome to budding sites. Interacts (via RING domain) with polymerase L; this interaction inhibits viral transcription and replication, Z partially blocks the product exit tunnel for the releasing nascent RNA product. Interacts with the glycoprotein complex; this interaction plays a role in virion budding. Interacts with host eIF4E; this interaction results in eIF4E reduced affinity for its substrate, the 5'-m7 G cap structure. Interacts (via late-budding domain) with host TSG101; this interaction is essential for budding and release of viral particles. Interacts with host RPLP0; this interaction may serve to load ribosome-like particles inside the virion. Interacts with host PML; this interaction induces PML bodies redistribution in the cytoplasm upon viral infection. Myristoylation is required for the role of RING finger protein Z in assembly and budding.

The protein resides in the virion. It localises to the host cytoplasm. It is found in the host perinuclear region. Its subcellular location is the host cell membrane. Functionally, plays a crucial role in virion assembly and budding. Expressed late in the virus life cycle, it acts as an inhibitor of viral transcription and RNA synthesis by interacting with the viral polymerase L. Presumably recruits the NP encapsidated genome to cellular membranes at budding sites via direct interaction with NP. Plays critical roles in the final steps of viral release by interacting with host TSG101, a member of the vacuolar protein-sorting pathway and using other cellular host proteins involved in vesicle formation pathway. The budding of the virus progeny occurs after association of protein Z with the viral glycoprotein complex SSP-GP1-GP2 at the cell periphery, step that requires myristoylation of protein Z. Also selectively represses protein production by associating with host eIF4E. In cell-based minigenome assay, has an inhibitory effect on the ribonucleoprotein machinery (vRNP), which is responsible for the replication and transcription of the viral genome. This Pirital mammarenavirus (isolate Rat/Venezuela/VAV-488/1995) (PIRV) protein is RING finger protein Z.